The chain runs to 492 residues: Beta-Ala-His dipeptidase (492 aa).

His107 is a Zn(2+) binding site. Residue Asp109 is part of the active site. Residue Asp140 participates in Zn(2+) binding. Glu174 functions as the Proton acceptor in the catalytic mechanism. Zn(2+) is bound at residue Glu175. The residue at position 194 (Ser194) is a Phosphoserine. Residues Asp203 and His453 each contribute to the Zn(2+) site.

The protein belongs to the peptidase M20A family. In terms of assembly, homodimer. It depends on Zn(2+) as a cofactor. As to expression, detected exclusively in kidney.

It localises to the secreted. The enzyme catalyses Preferential hydrolysis of the beta-Ala-|-His dipeptide (carnosine), and also anserine, Xaa-|-His dipeptides and other dipeptides including homocarnosine.. It carries out the reaction carnosine + H2O = beta-alanine + L-histidine. The catalysed reaction is anserine + H2O = N(pros)-methyl-L-histidine + beta-alanine. It catalyses the reaction L-alanyl-L-histidine + H2O = L-histidine + L-alanine. The enzyme catalyses glycyl-L-histidine + H2O = L-histidine + glycine. It carries out the reaction L-homocarnosine + H2O = 4-aminobutanoate + L-histidine. Functionally, catalyzes the peptide bond hydrolysis in Xaa-His dipeptides, displaying the highest activity toward carnosine (beta-alanyl-L-histidine) and anserine (beta-alanyl-3-methyl-histidine). This chain is Beta-Ala-His dipeptidase (Cndp1), found in Mus musculus (Mouse).